The sequence spans 533 residues: UDP-glucuronosyltransferase 1A1 (533 aa).

The N-terminal stretch at 1–25 is a signal peptide; it reads MAVESQGGRPLVLGLLLCVLGPVVS. N-linked (GlcNAc...) asparagine glycosylation is found at Asn102, Asn295, and Asn347. The helical transmembrane segment at 491–507 threads the bilayer; sequence VIGFLLAVVLTVAFITF.

It belongs to the UDP-glycosyltransferase family. In terms of assembly, homodimer. Homooligomer. Interacts with UGT1A3, UGT1A4, UGT1A6, UGT1A7, UGT1A8, UGT1A9 and UGT1A10 to form heterodimers. Isoform 1 interacts with isoform 2/i2 suggesting that oligomerization is involved in negative regulation of transferase activity by isoform 2. Isoform 1 also interacts with respective i2 isoforms of UGT1A3, UGT1A4, UGT1A6, UGT1A7, UGT1A8, UGT1A9 and UGT1A10. In terms of tissue distribution, expressed in liver, colon and small intestine. Not expressed in kidney, esophagus and skin. Expressed in liver, colon, small intestine and kidney. Not expressed in esophagus and skin.

It is found in the endoplasmic reticulum membrane. It localises to the cytoplasm. Its subcellular location is the perinuclear region. It carries out the reaction glucuronate acceptor + UDP-alpha-D-glucuronate = acceptor beta-D-glucuronoside + UDP + H(+). The catalysed reaction is 17beta-estradiol + UDP-alpha-D-glucuronate = 17beta-estradiol 3-O-(beta-D-glucuronate) + UDP + H(+). It catalyses the reaction 2-hydroxyestrone + UDP-alpha-D-glucuronate = 2-hydroxyestrone 3-O-(beta-D-glucuronate) + UDP + H(+). The enzyme catalyses 2-hydroxy-17beta-estradiol + UDP-alpha-D-glucuronate = 2-hydroxy-17beta-estradiol 3-O-(beta-D-glucuronate) + UDP + H(+). It carries out the reaction 2-methoxy-17beta-estradiol + UDP-alpha-D-glucuronate = 2-methoxy-17beta-estradiol 3-O-(beta-D-glucuronate) + UDP + H(+). The catalysed reaction is 17alpha-estradiol + UDP-alpha-D-glucuronate = 17alpha-estradiol 3-O-(beta-D-glucuronate) + UDP + H(+). It catalyses the reaction 16beta,17beta-estriol + UDP-alpha-D-glucuronate = 16beta,17beta-estriol 16-O-(beta-D-glucuronate) + UDP + H(+). The enzyme catalyses losartan + UDP-alpha-D-glucuronate = losartan-2-N-beta-D-glucuronide + UDP. It carries out the reaction prunetin + UDP-alpha-D-glucuronate = prunetin-4'-O-beta-D-glucuronide + UDP. The catalysed reaction is SN-38 + UDP-alpha-D-glucuronate = SN-38 O-beta-D-glucuronide + UDP + H(+). It catalyses the reaction (4Z,15Z)-bilirubin IXalpha + UDP-alpha-D-glucuronate = (4Z,15Z)-bilirubin IXalpha C12-beta-D-glucuronoside + UDP. The enzyme catalyses (4Z,15Z)-bilirubin IXalpha + UDP-alpha-D-glucuronate = (4Z,15Z)-bilirubin IXalpha C8-beta-D-glucuronoside + UDP. It carries out the reaction (4Z,15Z)-bilirubin IXalpha C8-beta-D-glucuronoside + UDP-alpha-D-glucuronate = (4Z,15Z)-bilirubin IXalpha C8,C12-beta-D-bisglucuronoside + UDP. The catalysed reaction is (4Z,15Z)-bilirubin IXalpha C12-beta-D-glucuronoside + UDP-alpha-D-glucuronate = (4Z,15Z)-bilirubin IXalpha C8,C12-beta-D-bisglucuronoside + UDP. It catalyses the reaction 8-iso-prostaglandin F2alpha + UDP-alpha-D-glucuronate = 8-iso-prostaglandin F2alpha-glucuronide + UDP + H(+). The enzyme catalyses (5Z,8Z,11Z,14Z)-eicosatetraenoate + UDP-alpha-D-glucuronate = O-[(5Z),(8Z),(11Z),(14Z)-eicosatetraenoyl]-beta-D-glucuronate + UDP. It carries out the reaction 15-hydroxy-(5Z,8Z,11Z,13E)-eicosatetraenoate + UDP-alpha-D-glucuronate = 15-O-(beta-D-glucuronosyl)-(5Z,8Z,11Z,14Z)-eicosatetraenoate + UDP + H(+). The catalysed reaction is 20-hydroxy-(5Z,8Z,11Z,14Z)-eicosatetraenoate + UDP-alpha-D-glucuronate = 20-O-(beta-D-glucuronosyl)-(5Z,8Z,11Z,14Z)-eicosatetraenoate + UDP + H(+). It catalyses the reaction prostaglandin B1 + UDP-alpha-D-glucuronate = 15-O-(beta-D-glucuronosyl)-prostaglandin B1 + UDP + H(+). The enzyme catalyses (E)-ferulate + UDP-alpha-D-glucuronate = (E)-4-O-(beta-D-glucuronosyl)-ferulate + UDP + H(+). It carries out the reaction (E)-ferulate + UDP-alpha-D-glucuronate = (E)-ferulic acid beta-D-glucuronate ester + UDP. In terms of biological role, UDP-glucuronosyltransferase (UGT) that catalyzes phase II biotransformation reactions in which lipophilic substrates are conjugated with glucuronic acid to increase the metabolite's water solubility, thereby facilitating excretion into either the urine or bile. Essential for the elimination and detoxification of drugs, xenobiotics and endogenous compounds. Catalyzes the glucuronidation of endogenous estrogen hormones such as estradiol, estrone and estriol. Involved in the glucuronidation of bilirubin, a degradation product occurring in the normal catabolic pathway that breaks down heme in vertebrates. Involved in the glucuronidation of arachidonic acid (AA) and AA-derived eicosanoids including 15-HETE, 20-HETE, PGB1 and F2-isoprostane (8-iso-PGF2alpha). Involved in the glucuronidation of the phytochemical ferulic acid at the phenolic or the carboxylic acid group. Also catalyzes the glucuronidation the isoflavones genistein, daidzein, glycitein, formononetin, biochanin A and prunetin, which are phytoestrogens with anticancer and cardiovascular properties. Involved in the glucuronidation of the AGTR1 angiotensin receptor antagonist losartan, a drug which can inhibit the effect of angiotensin II. Involved in the biotransformation of 7-ethyl-10-hydroxycamptothecin (SN-38), the pharmacologically active metabolite of the anticancer drug irinotecan. Its function is as follows. Lacks UGT glucuronidation activity but acts as a negative regulator of isoform 1. The chain is UDP-glucuronosyltransferase 1A1 from Homo sapiens (Human).